The primary structure comprises 238 residues: UPF0758 protein Ajs_3450 (238 aa).

One can recognise an MPN domain in the interval Val-116–Val-238. Positions 187, 189, and 200 each coordinate Zn(2+). Residues His-187–Asp-200 carry the JAMM motif motif.

The protein belongs to the UPF0758 family.

The polypeptide is UPF0758 protein Ajs_3450 (Acidovorax sp. (strain JS42)).